The chain runs to 339 residues: Undecaprenyl-phosphate 4-deoxy-4-formamido-L-arabinose transferase (339 aa).

The next 2 membrane-spanning stretches (helical) occupy residues 235 to 255 (LSLV…FLLV) and 269 to 289 (LFVL…GMGL).

This sequence belongs to the glycosyltransferase 2 family.

The protein resides in the cell inner membrane. The enzyme catalyses UDP-4-deoxy-4-formamido-beta-L-arabinose + di-trans,octa-cis-undecaprenyl phosphate = 4-deoxy-4-formamido-alpha-L-arabinopyranosyl di-trans,octa-cis-undecaprenyl phosphate + UDP. Its pathway is glycolipid biosynthesis; 4-amino-4-deoxy-alpha-L-arabinose undecaprenyl phosphate biosynthesis; 4-amino-4-deoxy-alpha-L-arabinose undecaprenyl phosphate from UDP-4-deoxy-4-formamido-beta-L-arabinose and undecaprenyl phosphate: step 1/2. The protein operates within bacterial outer membrane biogenesis; lipopolysaccharide biosynthesis. In terms of biological role, catalyzes the transfer of 4-deoxy-4-formamido-L-arabinose from UDP to undecaprenyl phosphate. The modified arabinose is attached to lipid A and is required for resistance to polymyxin and cationic antimicrobial peptides. The sequence is that of Undecaprenyl-phosphate 4-deoxy-4-formamido-L-arabinose transferase from Pseudomonas aeruginosa (strain UCBPP-PA14).